Reading from the N-terminus, the 400-residue chain is Probable transposase for insertion sequence element ISRM3-like (400 aa).

It belongs to the transposase mutator family.

Its function is as follows. Required for the transposition of the insertion element. The protein is Probable transposase for insertion sequence element ISRM3-like of Sinorhizobium fredii (strain NBRC 101917 / NGR234).